Consider the following 477-residue polypeptide: UDP-N-acetylmuramate--L-alanine ligase (477 aa).

122–128 (GTHGKTT) lines the ATP pocket.

Belongs to the MurCDEF family.

The protein resides in the cytoplasm. It carries out the reaction UDP-N-acetyl-alpha-D-muramate + L-alanine + ATP = UDP-N-acetyl-alpha-D-muramoyl-L-alanine + ADP + phosphate + H(+). It participates in cell wall biogenesis; peptidoglycan biosynthesis. Cell wall formation. The protein is UDP-N-acetylmuramate--L-alanine ligase of Xylella fastidiosa (strain M12).